A 387-amino-acid chain; its full sequence is ATP phosphoribosyltransferase regulatory subunit (387 aa).

Belongs to the class-II aminoacyl-tRNA synthetase family. HisZ subfamily. As to quaternary structure, heteromultimer composed of HisG and HisZ subunits.

The protein localises to the cytoplasm. Its pathway is amino-acid biosynthesis; L-histidine biosynthesis; L-histidine from 5-phospho-alpha-D-ribose 1-diphosphate: step 1/9. Its function is as follows. Required for the first step of histidine biosynthesis. May allow the feedback regulation of ATP phosphoribosyltransferase activity by histidine. The protein is ATP phosphoribosyltransferase regulatory subunit of Psychrobacter arcticus (strain DSM 17307 / VKM B-2377 / 273-4).